A 469-amino-acid chain; its full sequence is Zinc transporter SLC39A7 (469 aa).

The chain crosses the membrane as a helical span at residues 10-30 (WVAVGLLTWATLGLLVAGLGG). Basic and acidic residues-rich tracts occupy residues 42–56 (FHGHSHRHSHEDFHH) and 66–114 (HTHE…EHSH). The disordered stretch occupies residues 42 to 121 (FHGHSHRHSH…HSHGGYGESG (80 aa)). Position 66 is a pros-methylhistidine (His66). A run of 3 helical transmembrane segments spans residues 138-158 (ALGATVLISAAPFFVLFLIPV), 169-189 (LQILLSFASGGLLGDAFLHLI), and 214-234 (GPILSVGLWVLSGIVAFLVVE). Residues 242-263 (GGHGHSHGHGHAHSHTRGSHGH) show a composition bias toward basic residues. The segment at 242–310 (GGHGHSHGHG…VRPQNAEEEK (69 aa)) is disordered. Over residues 264–285 (GRQERSTKEKQSSEEEEKETRG) the composition is skewed to basic and acidic residues. Residues Ser275 and Ser276 each carry the phosphoserine; by CK2 modification. The next 2 helical transmembrane spans lie at 381–401 (MRLQLLTAVGALAGTACALLT) and 417–436 (GWVLPFTAGGFIYVATVSVL).

This sequence belongs to the ZIP transporter (TC 2.A.5) family. KE4/Catsup subfamily. Homodimer. Post-translationally, rapidly phosphorylated by CK2 following Zn(2+) treatment. This phosphorylation is required for efficient cytosolic Zn(2+) release. In terms of processing, methylation at some His residue by METTL9 leads to reduced zinc-binding. Widely expressed.

It localises to the endoplasmic reticulum membrane. The protein resides in the golgi apparatus. Its subcellular location is the cis-Golgi network membrane. It carries out the reaction Zn(2+)(in) = Zn(2+)(out). Its activity is regulated as follows. Phosphorylation activates zinc transport activity. Its function is as follows. Transports Zn(2+) from the endoplasmic reticulum (ER)/Golgi apparatus to the cytosol, playing an essential role in the regulation of cytosolic zinc levels. Acts as a gatekeeper of zinc release from intracellular stores, requiring post-translational activation by phosphorylation, resulting in activation of multiple downstream pathways leading to cell growth and proliferation. Has an essential role in B cell development and is required for proper B cell receptor signaling. Plays an important role in maintaining intestinal epithelial homeostasis and skin dermis development by regulating ER function. Controls cell signaling pathways involved in glucose metabolism in skeletal muscle. Has a protective role against ER stress in different biological contexts. Mediates Zn(2+)-induced ferroptosis. The sequence is that of Zinc transporter SLC39A7 (SLC39A7) from Homo sapiens (Human).